The chain runs to 221 residues: Sugar transporter SWEET1 (221 aa).

The next 7 helical transmembrane spans lie at 3-23, 44-63, 68-88, 102-122, 129-149, 160-180, and 186-206; these read AGGV…LGMF, FLPF…YGVL, TLII…LAYL, ATLL…VPDL, LGLF…ADLA, LSFS…IYGF, and YITV…VLFY. The region spanning 10–94 is the MtN3/slv 1 domain; the sequence is FLSSACVLFT…LAYLHYSPQK (85 aa). The region spanning 127–212 is the MtN3/slv 2 domain; sequence QQLGLFCSVF…VLFYKYPPEQ (86 aa). Residues 149–221 form a mediates interaction with TRPV2 region; it reads AKIIQTKSTQ…QDTKYRLLQT (73 aa).

This sequence belongs to the SWEET sugar transporter family. Interacts with TRPV2; the interaction probably occurs intracellularly and depends on TRPV2 N-glycosylation.

It is found in the golgi apparatus membrane. It localises to the cell membrane. Mediates sugar transport across membranes. May stimulate V(D)J recombination by the activation of RAG1. The chain is Sugar transporter SWEET1 (Slc50a1) from Rattus norvegicus (Rat).